A 604-amino-acid polypeptide reads, in one-letter code: MMRAVWEALAALAAVACLVGAVRGGPGLSMFAGQAAQPDPCSDENGHPRRCIPDFVNAAFGKDVRVSSTCGRPPARYCVVSERGEERLRSCHLCNASDPKKAHPPAFLTDLNNPHNLTCWQSENYLQFPHNVTLTLSLGKKFEVTYVSLQFCSPRPESMAIYKSMDYGRTWVPFQFYSTQCRKMYNRPHRAPITKQNEQEAVCTDSHTDMRPLSGGLIAFSTLDGRPSAHDFDNSPVLQDWVTATDIRVAFSRLHTFGDENEDDSELARDSYFYAVSDLQVGGRCKCNGHAARCVRDRDDSLVCDCRHNTAGPECDRCKPFHYDRPWQRATAREANECVACNCNLHARRCRFNMELYKLSGRKSGGVCLNCRHNTAGRHCHYCKEGYYRDMGKPITHRKACKACDCHPVGAAGKTCNQTTGQCPCKDGVTGITCNRCAKGYQQSRSPIAPCIKIPVAPPTTAASSVEEPEDCDSYCKASKGKLKINMKKYCKKDYAVQIHILKADKAGDWWKFTVNIISVYKQGTSRIRRGDQSLWIRSRDIACKCPKIKPLKKYLLLGNAEDSPDQSGIVADKSSLVIQWRDTWARRLRKFQQREKKGKCKKA.

The N-terminal stretch at 1-24 (MMRAVWEALAALAAVACLVGAVRG) is a signal peptide. Residues 47–284 (HPRRCIPDFV…AVSDLQVGGR (238 aa)) form the Laminin N-terminal domain. N-linked (GlcNAc...) asparagine glycans are attached at residues N95, N116, and N131. Intrachain disulfides connect C119/C152, C285/C294, C287/C304, C306/C315, C318/C338, C341/C350, C343/C368, C371/C380, C383/C401, C404/C416, C406/C423, C425/C434, C437/C451, C472/C544, and C491/C601. 3 Laminin EGF-like domains span residues 285–340 (CKCN…ECVA), 341–403 (CNCN…ACKA), and 404–453 (CDCH…PCIK). A glycan (N-linked (GlcNAc...) asparagine) is linked at N417. The NTR domain occupies 472 to 601 (CDSYCKASKG…FQQREKKGKC (130 aa)). The Cell attachment site motif lies at 530–532 (RGD).

In terms of assembly, binds to its receptors; DCC, UNC5A, UNC5B, UNC5C and probably UNC5D. Binds to its receptor; DSCAM. Interacts with DCC. Interacts with APP. In terms of tissue distribution, widely expressed in normal adult tissues with highest levels in heart, small intestine, colon, liver and prostate. Reduced expression in brain tumors and neuroblastomas. Expressed in epididymis (at protein level).

It is found in the secreted. It localises to the cytoplasm. Its function is as follows. Netrins control guidance of CNS commissural axons and peripheral motor axons. Its association with either DCC or some UNC5 receptors will lead to axon attraction or repulsion, respectively. Binding to UNC5C might cause dissociation of UNC5C from polymerized TUBB3 in microtubules and thereby lead to increased microtubule dynamics and axon repulsion. Involved in dorsal root ganglion axon projection towards the spinal cord. It also serves as a survival factor via its association with its receptors which prevent the initiation of apoptosis. Involved in tumorigenesis by regulating apoptosis. This is Netrin-1 (NTN1) from Homo sapiens (Human).